Reading from the N-terminus, the 515-residue chain is GMP synthase [glutamine-hydrolyzing] (515 aa).

One can recognise a Glutamine amidotransferase type-1 domain in the interval 6 to 198 (KVIILDFGSQ…VFKVAGLKAD (193 aa)). The active-site Nucleophile is the Cys83. Residues His172 and Glu174 contribute to the active site. Residues 199 to 390 (WTMSSFVENC…LGLPEFIIWR (192 aa)) enclose the GMPS ATP-PPase domain. ATP is bound at residue 226–232 (SGGIDST).

In terms of assembly, homodimer.

It catalyses the reaction XMP + L-glutamine + ATP + H2O = GMP + L-glutamate + AMP + diphosphate + 2 H(+). It functions in the pathway purine metabolism; GMP biosynthesis; GMP from XMP (L-Gln route): step 1/1. In terms of biological role, catalyzes the synthesis of GMP from XMP. The polypeptide is GMP synthase [glutamine-hydrolyzing] (Maridesulfovibrio salexigens (strain ATCC 14822 / DSM 2638 / NCIMB 8403 / VKM B-1763) (Desulfovibrio salexigens)).